We begin with the raw amino-acid sequence, 335 residues long: NADH-quinone oxidoreductase subunit H (335 aa).

A run of 8 helical transmembrane segments spans residues 12 to 32, 81 to 101, 114 to 134, 154 to 174, 187 to 207, 238 to 258, 270 to 290, and 307 to 327; these read IIAV…GALL, VIFT…FAVI, IGLL…LFAG, VSYE…VGSF, LWFI…GVAV, FFVG…TLFF, SLAF…FILL, and WKFC…IVLL.

It belongs to the complex I subunit 1 family. As to quaternary structure, NDH-1 is composed of 13 different subunits. Subunits NuoA, H, J, K, L, M, N constitute the membrane sector of the complex.

It localises to the cell inner membrane. The enzyme catalyses a quinone + NADH + 5 H(+)(in) = a quinol + NAD(+) + 4 H(+)(out). In terms of biological role, NDH-1 shuttles electrons from NADH, via FMN and iron-sulfur (Fe-S) centers, to quinones in the respiratory chain. The immediate electron acceptor for the enzyme in this species is believed to be ubiquinone. Couples the redox reaction to proton translocation (for every two electrons transferred, four hydrogen ions are translocated across the cytoplasmic membrane), and thus conserves the redox energy in a proton gradient. This subunit may bind ubiquinone. The sequence is that of NADH-quinone oxidoreductase subunit H from Pseudomonas syringae pv. tomato (strain ATCC BAA-871 / DC3000).